Reading from the N-terminus, the 457-residue chain is ATP-dependent protease ATPase subunit HslU (457 aa).

ATP contacts are provided by residues I18 and 60–65; that span reads GVGKTE. Positions 142 to 171 are disordered; sequence KQPGMGFFNPAAPEEQEEQPSADQSSTREK. Residues D269, E335, and R407 each contribute to the ATP site.

Belongs to the ClpX chaperone family. HslU subfamily. As to quaternary structure, a double ring-shaped homohexamer of HslV is capped on each side by a ring-shaped HslU homohexamer. The assembly of the HslU/HslV complex is dependent on binding of ATP.

The protein localises to the cytoplasm. Functionally, ATPase subunit of a proteasome-like degradation complex; this subunit has chaperone activity. The binding of ATP and its subsequent hydrolysis by HslU are essential for unfolding of protein substrates subsequently hydrolyzed by HslV. HslU recognizes the N-terminal part of its protein substrates and unfolds these before they are guided to HslV for hydrolysis. This chain is ATP-dependent protease ATPase subunit HslU, found in Maridesulfovibrio salexigens (strain ATCC 14822 / DSM 2638 / NCIMB 8403 / VKM B-1763) (Desulfovibrio salexigens).